We begin with the raw amino-acid sequence, 140 residues long: Nucleoside diphosphate kinase (140 aa).

ATP is bound by residues Lys11, Phe59, Arg87, Thr93, Arg104, and Asn114. The active-site Pros-phosphohistidine intermediate is the His117.

This sequence belongs to the NDK family. In terms of assembly, homotetramer. Mg(2+) is required as a cofactor.

It is found in the cytoplasm. It carries out the reaction a 2'-deoxyribonucleoside 5'-diphosphate + ATP = a 2'-deoxyribonucleoside 5'-triphosphate + ADP. The enzyme catalyses a ribonucleoside 5'-diphosphate + ATP = a ribonucleoside 5'-triphosphate + ADP. Its function is as follows. Major role in the synthesis of nucleoside triphosphates other than ATP. The ATP gamma phosphate is transferred to the NDP beta phosphate via a ping-pong mechanism, using a phosphorylated active-site intermediate. In Roseobacter denitrificans (strain ATCC 33942 / OCh 114) (Erythrobacter sp. (strain OCh 114)), this protein is Nucleoside diphosphate kinase.